The sequence spans 521 residues: Type-1 glutamine synthetase 2 (521 aa).

One can recognise a GS beta-grasp domain in the interval 76-176 (NQIKISKSPF…FLMDFIGTNG (101 aa)). The GS catalytic domain occupies 183 to 521 (PRSTLKKVIK…WELERYLEII (339 aa)).

This sequence belongs to the glutamine synthetase family.

The catalysed reaction is L-glutamate + NH4(+) + ATP = L-glutamine + ADP + phosphate + H(+). This chain is Type-1 glutamine synthetase 2 (glnA2), found in Dictyostelium discoideum (Social amoeba).